The primary structure comprises 275 residues: Exosome complex component Rrp42 (275 aa).

Belongs to the RNase PH family. Rrp42 subfamily. As to quaternary structure, component of the archaeal exosome complex. Forms a hexameric ring-like arrangement composed of 3 Rrp41-Rrp42 heterodimers. The hexameric ring associates with a trimer of Rrp4 and/or Csl4 subunits.

The protein localises to the cytoplasm. Functionally, non-catalytic component of the exosome, which is a complex involved in RNA degradation. Contributes to the structuring of the Rrp41 active site. The chain is Exosome complex component Rrp42 from Saccharolobus islandicus (strain Y.N.15.51 / Yellowstone #2) (Sulfolobus islandicus).